A 651-amino-acid chain; its full sequence is Bromodomain-containing protein 7 (651 aa).

2 disordered regions span residues 36 to 133 and 257 to 298; these read ELST…EVEQ and KDKV…KKKD. Residues 58-69 show a composition bias toward basic residues; the sequence is HKDRKRKKRKKG. The Nuclear localization signal signature appears at 65–96; it reads KRKKGEKQVPGEEKEKRKRKVKEDKRKRDREH. Basic and acidic residues predominate over residues 70–105; the sequence is EKQVPGEEKEKRKRKVKEDKRKRDREHPDSEGEQEL. The region spanning 131-235 is the Bromo domain; that stretch reads VEQTPLQEAL…HSGMKILSQE (105 aa). Positions 271-298 are enriched in basic and acidic residues; sequence GSGKDKGEPVDGDTKAFKTPNKEHKKKD. Residues 533 to 564 adopt a coiled-coil conformation; it reads SEEAEIFQRKLDETTKLLRELQDAQNERLSTK.

It is found in the nucleus. The protein localises to the chromosome. Acts both as coactivator and as corepressor. May play a role in chromatin remodeling. Participates in the Wnt signaling pathway. Transcriptional corepressor that down-regulates the expression of target genes. Binds to target promoters, leading to increased histone H3 acetylation. Coactivator for TP53-mediated activation of transcription of a set of target genes. Required for TP53-mediated cell-cycle arrest in response to oncogene activation. Inhibits cell cycle progression from G1 to S phase. The chain is Bromodomain-containing protein 7 (BRD7) from Gallus gallus (Chicken).